A 231-amino-acid polypeptide reads, in one-letter code: Class II histocompatibility antigen, B-L beta chain (231 aa).

The tract at residues 1-89 is beta-1; it reads FFQWSATVEC…IVAPLTLQRR (89 aa). Topologically, residues 1–194 are extracellular; that stretch reads FFQWSATVEC…PGDVSRSKLL (194 aa). 2 disulfides stabilise this stretch: cysteine 10-cysteine 74 and cysteine 111-cysteine 167. N-linked (GlcNAc...) asparagine glycosylation is present at asparagine 14. A beta-2 region spans residues 90-182; the sequence is EPKVRIFALQ…SLQQPITQRW (93 aa). Residues 91-179 form the Ig-like C1-type domain; sequence PKVRIFALQS…EHTSLQQPIT (89 aa). The interval 183 to 194 is connecting peptide; it reads EPPGDVSRSKLL. The helical transmembrane segment at 195–219 threads the bilayer; the sequence is MGVGGFVLGLVYLALGIFFFLCSKK. The Cytoplasmic portion of the chain corresponds to 220–231; the sequence is GQPDPTSPGILN.

Belongs to the MHC class II family.

It localises to the membrane. The protein is Class II histocompatibility antigen, B-L beta chain of Gallus gallus (Chicken).